Here is a 130-residue protein sequence, read N- to C-terminus: Iron-sulfur cluster insertion protein ErpA (130 aa).

Positions 46, 116, and 118 each coordinate iron-sulfur cluster.

This sequence belongs to the HesB/IscA family. In terms of assembly, homodimer. Iron-sulfur cluster is required as a cofactor.

Its function is as follows. Required for insertion of 4Fe-4S clusters for at least IspG. The protein is Iron-sulfur cluster insertion protein ErpA of Legionella pneumophila (strain Lens).